A 234-amino-acid polypeptide reads, in one-letter code: bZIP transcription factor 1 (234 aa).

Positions 67-134 (RAQSDGSNAL…DKQRNAQQQL (68 aa)) are disordered. Residues 70–86 (SDGSNALLSSIGPSGTT) show a composition bias toward polar residues. The span at 88–128 (RPRDEMDCFTDTHKHKRGDGNKSRRREQCRANQARYRDKQR) shows a compositional bias: basic and acidic residues. Residues 106–169 (DGNKSRRREQ…RTNQSPWNTV (64 aa)) form the bZIP domain. The basic motif stretch occupies residues 109–128 (KSRRREQCRANQARYRDKQR). Residues 134 to 155 (LERSVEQLQSELSTLKHRNLDL) are leucine-zipper.

It belongs to the bZIP family. Interacts with PKZ1.

The protein localises to the nucleus. In terms of biological role, required for normal zoospore movement, formation of appressoria by germinated zoospore cysts and plant infection. This chain is bZIP transcription factor 1, found in Phytophthora infestans (Potato late blight agent).